A 458-amino-acid polypeptide reads, in one-letter code: Tubulin beta chain (458 aa).

GTP is bound by residues Gln11, Glu69, Ser138, Gly142, Thr143, Gly144, Asn204, and Asn226. Glu69 serves as a coordination point for Mg(2+). The disordered stretch occupies residues 426–458; the sequence is EAATVEGEEEEDEYAEGGVVNGDQSYDEPYQAA. A compositionally biased stretch (acidic residues) spans 431–440; sequence EGEEEEDEYA.

It belongs to the tubulin family. In terms of assembly, dimer of alpha and beta chains. A typical microtubule is a hollow water-filled tube with an outer diameter of 25 nm and an inner diameter of 15 nM. Alpha-beta heterodimers associate head-to-tail to form protofilaments running lengthwise along the microtubule wall with the beta-tubulin subunit facing the microtubule plus end conferring a structural polarity. Microtubules usually have 13 protofilaments but different protofilament numbers can be found in some organisms and specialized cells. Mg(2+) is required as a cofactor.

Its subcellular location is the cytoplasm. The protein resides in the cytoskeleton. Tubulin is the major constituent of microtubules, a cylinder consisting of laterally associated linear protofilaments composed of alpha- and beta-tubulin heterodimers. Microtubules grow by the addition of GTP-tubulin dimers to the microtubule end, where a stabilizing cap forms. Below the cap, tubulin dimers are in GDP-bound state, owing to GTPase activity of alpha-tubulin. This Pyropia yezoensis (Susabi-nori) protein is Tubulin beta chain (TUBB1).